We begin with the raw amino-acid sequence, 131 residues long: Glycine cleavage system H protein (131 aa).

The 83-residue stretch at Thr24–Gln106 folds into the Lipoyl-binding domain. An N6-lipoyllysine modification is found at Lys65.

Belongs to the GcvH family. As to quaternary structure, the glycine cleavage system is composed of four proteins: P, T, L and H. (R)-lipoate serves as cofactor.

Functionally, the glycine cleavage system catalyzes the degradation of glycine. The H protein shuttles the methylamine group of glycine from the P protein to the T protein. The polypeptide is Glycine cleavage system H protein (Mycobacterium sp. (strain JLS)).